Consider the following 194-residue polypeptide: MNLIPTVIETTNRGERAYDIYSRLLKDRIIMLGSQIDDNVANSIVSQLLFLQAQDSEKDIYLYINSPGGSVTAGFAIYDTIQHIKPDVQTICIGMAASMGSFLLAAGAKGKRFALPNAEVMIHQPLGGAQGQATEIEIAANHILKTREKLNRILSERTGQSIEKIQQDTDRDNFLTAAEAKEYGLIDEVMEPEK.

The active-site Nucleophile is the Ser98. His123 is a catalytic residue.

This sequence belongs to the peptidase S14 family. Fourteen ClpP subunits assemble into 2 heptameric rings which stack back to back to give a disk-like structure with a central cavity, resembling the structure of eukaryotic proteasomes.

Its subcellular location is the cytoplasm. It catalyses the reaction Hydrolysis of proteins to small peptides in the presence of ATP and magnesium. alpha-casein is the usual test substrate. In the absence of ATP, only oligopeptides shorter than five residues are hydrolyzed (such as succinyl-Leu-Tyr-|-NHMec, and Leu-Tyr-Leu-|-Tyr-Trp, in which cleavage of the -Tyr-|-Leu- and -Tyr-|-Trp bonds also occurs).. Cleaves peptides in various proteins in a process that requires ATP hydrolysis. Has a chymotrypsin-like activity. Plays a major role in the degradation of misfolded proteins. The polypeptide is ATP-dependent Clp protease proteolytic subunit (Staphylococcus epidermidis (strain ATCC 35984 / DSM 28319 / BCRC 17069 / CCUG 31568 / BM 3577 / RP62A)).